We begin with the raw amino-acid sequence, 126 residues long: Bactofilin BacO (126 aa).

It belongs to the bactofilin family. In terms of assembly, interacts with BacN and probably also BacP, the 3 proteins colocalize as an extended structure. Interacts with PadC.

The protein resides in the cytoplasm. Its subcellular location is the cytoskeleton. A non-essential component of the chromosome segregation machinery. Positions the ParA-ParB-parS chromosome segregation machinery within the cell; BacP seems to be the most important bactofilin in this process. Forms a heteropolymeric, subpolar scaffold in the cell; BacP probably forms the core, BacO contributes to position and integrity while BacN does not seem to contribute to assembly. The polypeptide is Bactofilin BacO (Myxococcus xanthus (strain DK1622)).